Here is a 455-residue protein sequence, read N- to C-terminus: Bifunctional protein GlmU (455 aa).

Residues 1-227 (MGLSVIILAA…CEEVQGVNDR (227 aa)) are pyrophosphorylase. UDP-N-acetyl-alpha-D-glucosamine is bound by residues 8–11 (LAAG), lysine 22, glutamine 73, 78–79 (GT), 100–102 (YGD), glycine 137, glutamate 152, asparagine 167, and asparagine 225. A Mg(2+)-binding site is contributed by aspartate 102. Asparagine 225 provides a ligand contact to Mg(2+). Residues 228-248 (WELTKLERYYQRLMAKKLSLA) are linker. The N-acetyltransferase stretch occupies residues 249–455 (GVTIIDPERF…KGWHRPTKKE (207 aa)). The UDP-N-acetyl-alpha-D-glucosamine site is built by arginine 332 and lysine 350. Catalysis depends on histidine 362, which acts as the Proton acceptor. UDP-N-acetyl-alpha-D-glucosamine contacts are provided by tyrosine 365 and asparagine 376. Residues alanine 379, 385–386 (NY), serine 404, alanine 422, and arginine 439 each bind acetyl-CoA.

The protein in the N-terminal section; belongs to the N-acetylglucosamine-1-phosphate uridyltransferase family. In the C-terminal section; belongs to the transferase hexapeptide repeat family. As to quaternary structure, homotrimer. Mg(2+) serves as cofactor.

The protein resides in the cytoplasm. It carries out the reaction alpha-D-glucosamine 1-phosphate + acetyl-CoA = N-acetyl-alpha-D-glucosamine 1-phosphate + CoA + H(+). The enzyme catalyses N-acetyl-alpha-D-glucosamine 1-phosphate + UTP + H(+) = UDP-N-acetyl-alpha-D-glucosamine + diphosphate. It functions in the pathway nucleotide-sugar biosynthesis; UDP-N-acetyl-alpha-D-glucosamine biosynthesis; N-acetyl-alpha-D-glucosamine 1-phosphate from alpha-D-glucosamine 6-phosphate (route II): step 2/2. Its pathway is nucleotide-sugar biosynthesis; UDP-N-acetyl-alpha-D-glucosamine biosynthesis; UDP-N-acetyl-alpha-D-glucosamine from N-acetyl-alpha-D-glucosamine 1-phosphate: step 1/1. The protein operates within bacterial outer membrane biogenesis; LPS lipid A biosynthesis. Catalyzes the last two sequential reactions in the de novo biosynthetic pathway for UDP-N-acetylglucosamine (UDP-GlcNAc). The C-terminal domain catalyzes the transfer of acetyl group from acetyl coenzyme A to glucosamine-1-phosphate (GlcN-1-P) to produce N-acetylglucosamine-1-phosphate (GlcNAc-1-P), which is converted into UDP-GlcNAc by the transfer of uridine 5-monophosphate (from uridine 5-triphosphate), a reaction catalyzed by the N-terminal domain. The polypeptide is Bifunctional protein GlmU (Coxiella burnetii (strain CbuK_Q154) (Coxiella burnetii (strain Q154))).